The primary structure comprises 64 residues: Large ribosomal subunit protein bL35 (64 aa).

Over residues 1 to 22 the composition is skewed to basic residues; sequence MPKMKSHTGMGKRVRVTGKGKI. The tract at residues 1-28 is disordered; sequence MPKMKSHTGMGKRVRVTGKGKIVKQQAG.

It belongs to the bacterial ribosomal protein bL35 family.

In Salinispora tropica (strain ATCC BAA-916 / DSM 44818 / JCM 13857 / NBRC 105044 / CNB-440), this protein is Large ribosomal subunit protein bL35.